We begin with the raw amino-acid sequence, 39 residues long: Photosystem II reaction center protein J (39 aa).

Residues 9–29 form a helical membrane-spanning segment; the sequence is LWLVATVGGIAAITVLGIFIY.

It belongs to the PsbJ family. As to quaternary structure, PSII is composed of 1 copy each of membrane proteins PsbA, PsbB, PsbC, PsbD, PsbE, PsbF, PsbH, PsbI, PsbJ, PsbK, PsbL, PsbM, PsbT, PsbX, PsbY, PsbZ, Psb30/Ycf12, at least 3 peripheral proteins of the oxygen-evolving complex and a large number of cofactors. It forms dimeric complexes.

It localises to the plastid. It is found in the chloroplast thylakoid membrane. Its function is as follows. One of the components of the core complex of photosystem II (PSII). PSII is a light-driven water:plastoquinone oxidoreductase that uses light energy to abstract electrons from H(2)O, generating O(2) and a proton gradient subsequently used for ATP formation. It consists of a core antenna complex that captures photons, and an electron transfer chain that converts photonic excitation into a charge separation. This Pyropia yezoensis (Susabi-nori) protein is Photosystem II reaction center protein J.